The chain runs to 536 residues: Fanconi anemia group E protein (536 aa).

An interaction with FANCC region spans residues 150–371 (MEGASPLSER…VLTRSLFLGR (222 aa)). A disordered region spans residues 171–252 (LGLGGRRLKS…ADGGSASPIK (82 aa)). Residues 230–239 (EKERPEHKSL) are compositionally biased toward basic and acidic residues. The residue at position 249 (S249) is a Phosphoserine. The residue at position 346 (T346) is a Phosphothreonine; by CHEK1. S374 carries the phosphoserine; by CHEK1 modification.

As to quaternary structure, belongs to the multisubunit FA complex composed of FANCA, FANCB, FANCC, FANCE, FANCF, FANCG, FANCL/PHF9 and FANCM. The complex is not found in FA patients. Interacts with FANCC and FANCD2. Phosphorylated. Phosphorylation by CHEK1 at Thr-346 and Ser-374 regulates its function in DNA cross-links repair. In terms of processing, ubiquitinated. Phosphorylation by CHEK1 induces polyubiquitination and degradation.

The protein localises to the nucleus. Functionally, as part of the Fanconi anemia (FA) complex functions in DNA cross-links repair. Required for the nuclear accumulation of FANCC and provides a critical bridge between the FA complex and FANCD2. This chain is Fanconi anemia group E protein (FANCE), found in Homo sapiens (Human).